The primary structure comprises 436 residues: Phosphomethylpyrimidine synthase (436 aa).

Substrate is bound by residues Asn69, Met98, Tyr127, His163, 185-187 (SRG), 226-229 (DACR), and Glu265. Residue His269 coordinates Zn(2+). Substrate is bound at residue Tyr292. Position 333 (His333) interacts with Zn(2+). The [4Fe-4S] cluster site is built by Cys409, Cys412, and Cys416.

It belongs to the ThiC family. It depends on [4Fe-4S] cluster as a cofactor.

It catalyses the reaction 5-amino-1-(5-phospho-beta-D-ribosyl)imidazole + S-adenosyl-L-methionine = 4-amino-2-methyl-5-(phosphooxymethyl)pyrimidine + CO + 5'-deoxyadenosine + formate + L-methionine + 3 H(+). It participates in cofactor biosynthesis; thiamine diphosphate biosynthesis. In terms of biological role, catalyzes the synthesis of the hydroxymethylpyrimidine phosphate (HMP-P) moiety of thiamine from aminoimidazole ribotide (AIR) in a radical S-adenosyl-L-methionine (SAM)-dependent reaction. This chain is Phosphomethylpyrimidine synthase, found in Clostridium perfringens (strain SM101 / Type A).